We begin with the raw amino-acid sequence, 356 residues long: Peptide chain release factor 1 (356 aa).

Q233 carries the N5-methylglutamine modification.

This sequence belongs to the prokaryotic/mitochondrial release factor family. Post-translationally, methylated by PrmC. Methylation increases the termination efficiency of RF1.

The protein localises to the cytoplasm. Its function is as follows. Peptide chain release factor 1 directs the termination of translation in response to the peptide chain termination codons UAG and UAA. The chain is Peptide chain release factor 1 from Symbiobacterium thermophilum (strain DSM 24528 / JCM 14929 / IAM 14863 / T).